Here is a 317-residue protein sequence, read N- to C-terminus: Ribosomal RNA small subunit methyltransferase H (317 aa).

S-adenosyl-L-methionine is bound by residues 30-32, aspartate 50, tyrosine 78, aspartate 95, and glutamine 102; that span reads GGH.

It belongs to the methyltransferase superfamily. RsmH family.

It is found in the cytoplasm. The enzyme catalyses cytidine(1402) in 16S rRNA + S-adenosyl-L-methionine = N(4)-methylcytidine(1402) in 16S rRNA + S-adenosyl-L-homocysteine + H(+). Functionally, specifically methylates the N4 position of cytidine in position 1402 (C1402) of 16S rRNA. This Nitrosomonas eutropha (strain DSM 101675 / C91 / Nm57) protein is Ribosomal RNA small subunit methyltransferase H.